Here is a 452-residue protein sequence, read N- to C-terminus: uncharacterized protein (452 aa).

The next 7 membrane-spanning stretches (helical) occupy residues 18 to 38, 81 to 101, 269 to 289, 317 to 337, 354 to 374, 390 to 410, and 428 to 448; these read PIIESDLEVIVIALGGYVLAK, LLPVFYVIISAASILISFLLA, IVLLLDFFSPPLYSLFIALFI, AGQVAVPMILVVLGASLATDI, VIIVCLLGRMVVVPLALLPAF, VFVVVIFLLVGSPTAIQLTQI, and SYAVFTPPNSLLLAFASLLVV.

This sequence belongs to the auxin efflux carrier (TC 2.A.69) family.

Its subcellular location is the membrane. This is an uncharacterized protein from Schizosaccharomyces pombe (strain 972 / ATCC 24843) (Fission yeast).